The following is a 966-amino-acid chain: Glycine dehydrogenase (decarboxylating) (966 aa).

An N6-(pyridoxal phosphate)lysine modification is found at Lys-713.

Belongs to the GcvP family. In terms of assembly, the glycine cleavage system is composed of four proteins: P, T, L and H. The cofactor is pyridoxal 5'-phosphate.

The enzyme catalyses N(6)-[(R)-lipoyl]-L-lysyl-[glycine-cleavage complex H protein] + glycine + H(+) = N(6)-[(R)-S(8)-aminomethyldihydrolipoyl]-L-lysyl-[glycine-cleavage complex H protein] + CO2. The glycine cleavage system catalyzes the degradation of glycine. The P protein binds the alpha-amino group of glycine through its pyridoxal phosphate cofactor; CO(2) is released and the remaining methylamine moiety is then transferred to the lipoamide cofactor of the H protein. This is Glycine dehydrogenase (decarboxylating) from Psychromonas ingrahamii (strain DSM 17664 / CCUG 51855 / 37).